A 636-amino-acid chain; its full sequence is Protein BCAP (636 aa).

Coiled-coil stretches lie at residues 36-97, 141-220, 249-325, 377-484, and 519-631; these read LSCL…EQKE, ESEN…WNLQ, YKQR…HGKN, ISSE…ECQE, and LEEE…KMNS.

This sequence belongs to the ODF2 family. In terms of tissue distribution, mainly expressed in trachea and testis. Not detected in bone marrow, bladder, leukocytes. Only weakly detected in tongue, stomach, brain and ovaries.

The protein resides in the cytoplasm. It is found in the cytoskeleton. Its subcellular location is the microtubule organizing center. The protein localises to the centrosome. It localises to the centriole. The protein resides in the centriolar satellite. It is found in the cilium basal body. Acts as a suppressor of ciliogenesis, specifically, the initiation of ciliogenesis. This is Protein BCAP from Homo sapiens (Human).